A 444-amino-acid polypeptide reads, in one-letter code: Phosphoglucosamine mutase (444 aa).

Serine 99 acts as the Phosphoserine intermediate in catalysis. Residues serine 99, aspartate 242, aspartate 244, and aspartate 246 each coordinate Mg(2+). Serine 99 is subject to Phosphoserine.

Belongs to the phosphohexose mutase family. The cofactor is Mg(2+). Post-translationally, activated by phosphorylation.

The enzyme catalyses alpha-D-glucosamine 1-phosphate = D-glucosamine 6-phosphate. Catalyzes the conversion of glucosamine-6-phosphate to glucosamine-1-phosphate. This Aliarcobacter butzleri (strain RM4018) (Arcobacter butzleri) protein is Phosphoglucosamine mutase.